Consider the following 169-residue polypeptide: ATP synthase subunit b (169 aa).

Residues 13–33 traverse the membrane as a helical segment; the sequence is LFLFQLINFLIIVFILKKFLF.

The protein belongs to the ATPase B chain family. In terms of assembly, F-type ATPases have 2 components, F(1) - the catalytic core - and F(0) - the membrane proton channel. F(1) has five subunits: alpha(3), beta(3), gamma(1), delta(1), epsilon(1). F(0) has three main subunits: a(1), b(2) and c(10-14). The alpha and beta chains form an alternating ring which encloses part of the gamma chain. F(1) is attached to F(0) by a central stalk formed by the gamma and epsilon chains, while a peripheral stalk is formed by the delta and b chains.

The protein resides in the cell inner membrane. Functionally, f(1)F(0) ATP synthase produces ATP from ADP in the presence of a proton or sodium gradient. F-type ATPases consist of two structural domains, F(1) containing the extramembraneous catalytic core and F(0) containing the membrane proton channel, linked together by a central stalk and a peripheral stalk. During catalysis, ATP synthesis in the catalytic domain of F(1) is coupled via a rotary mechanism of the central stalk subunits to proton translocation. In terms of biological role, component of the F(0) channel, it forms part of the peripheral stalk, linking F(1) to F(0). The protein is ATP synthase subunit b of Endomicrobium trichonymphae.